A 129-amino-acid chain; its full sequence is Fluoride-specific ion channel FluC 1 (129 aa).

The next 4 membrane-spanning stretches (helical) occupy residues 9 to 29 (LSVGIFAFFGGGLRAYLNLIW), 33 to 53 (GTLTANIIGCFLLAFFTYFFV), 62 to 82 (LVTGLSTGFVGSFTTFSSFNL), and 98 to 118 (IYFFSSIFIGFLFAYLGMLVG). Na(+) is bound by residues Gly-72 and Thr-75.

This sequence belongs to the fluoride channel Fluc/FEX (TC 1.A.43) family.

The protein resides in the cell membrane. The enzyme catalyses fluoride(in) = fluoride(out). With respect to regulation, na(+) is not transported, but it plays an essential structural role and its presence is essential for fluoride channel function. In terms of biological role, fluoride-specific ion channel. Important for reducing fluoride concentration in the cell, thus reducing its toxicity. This chain is Fluoride-specific ion channel FluC 1, found in Lactobacillus johnsonii (strain CNCM I-12250 / La1 / NCC 533).